Reading from the N-terminus, the 156-residue chain is Small ribosomal subunit protein uS7 (156 aa).

This sequence belongs to the universal ribosomal protein uS7 family. In terms of assembly, part of the 30S ribosomal subunit. Contacts proteins S9 and S11.

Its function is as follows. One of the primary rRNA binding proteins, it binds directly to 16S rRNA where it nucleates assembly of the head domain of the 30S subunit. Is located at the subunit interface close to the decoding center, probably blocks exit of the E-site tRNA. The polypeptide is Small ribosomal subunit protein uS7 (Streptomyces avermitilis (strain ATCC 31267 / DSM 46492 / JCM 5070 / NBRC 14893 / NCIMB 12804 / NRRL 8165 / MA-4680)).